The chain runs to 546 residues: MLTPKKWLLGVLVVSGMLGAQKTNAVPRPKLVVGLVVDQMRWDYLYRYYSKYGEGGFKRMLNTGYSLNNVHIDYVPTVTAIGHTSIFTGSVPSIHGIAGNDWYDKELGKSVYCTSDETVQPVGTTSNSVGQHSPRNLWSTTVTDQLGLATNFTSKVVGVSLKDRASILPAGHNPTGAFWFDDTTGKFITSTYYTKELPKWVNDFNNKNVPAQLVANGWNTLLPINQYTESSEDNVEWEGLLGSKKTPTFPYTDLAKDYEAKKGLIRTTPFGNTLTLQMADAAIDGNQMGVDDITDFLTVNLASTDYVGHNFGPNSIEVEDTYLRLDRDLADFFNNLDKKVGKGNYLVFLSADHGAAHSVGFMQAHKMPTGFFVEDMKKEMNAKLKQKFGADNIIAAAMNYQVYFDRKVLADSKLELDDVRDYVMTELKKEPSVLYVLSTDEIWESSIPEPIKSRVINGYNWKRSGDIQIISKDGYLSAYSKKGTTHSVWNSYDSHIPLLFMGWGIKQGESNQPYHMTDIAPTVSSLLKIQFPSGAVGKPITEVIGR.

An N-terminal signal peptide occupies residues 1 to 25 (MLTPKKWLLGVLVVSGMLGAQKTNA). 2 residues coordinate Zn(2+): D38 and T79. The active-site Phosphothreonine intermediate is T79. Residues N100 and 162–164 (KDR) contribute to the substrate site. Positions 305, 309, 352, 353, and 486 each coordinate Zn(2+).

Zn(2+) is required as a cofactor.

It is found in the periplasm. It catalyses the reaction a phosphate monoester + H2O = an alcohol + phosphate. With respect to regulation, strongly inhibited by orthovanadate and EDTA. Also inhibited by inorganic phosphate. Its function is as follows. Alkaline phosphatase with broad substrate specificity. Has phosphatase activity towards nucleotide phosphates with a preference for ATP. Active towards a great variety of phosphomonoesters with the exception of 2',3'-cyclic AMP and myo-inositol hexakisphosphate. The chain is Alkaline phosphatase PafA from Elizabethkingia meningoseptica (Chryseobacterium meningosepticum).